A 339-amino-acid chain; its full sequence is Large ribosomal subunit protein uL11m (339 aa).

This sequence belongs to the universal ribosomal protein uL11 family.

The protein resides in the mitochondrion. The polypeptide is Large ribosomal subunit protein uL11m (RPL11) (Acanthamoeba castellanii (Amoeba)).